The following is a 180-amino-acid chain: Cytokinin-beta-glucosidase 1 (180 aa).

Its function is as follows. Hydrolyzes cytokinin glucosides thus liberating free cytokinins. In Linaria vulgaris (Toadflax), this protein is Cytokinin-beta-glucosidase 1 (ROLC1).